Here is a 1285-residue protein sequence, read N- to C-terminus: Period circadian protein homolog 1 (1285 aa).

A disordered region spans residues 1–134 (MSGPLEGADG…SSEQSARART (134 aa)). An interaction with BTRC region spans residues 1-151 (MSGPLEGADG…LRELKLRLPP (151 aa)). Composition is skewed to low complexity over residues 48–57 (NSNGSSGNES) and 64–115 (GASQ…ASSE). A compositionally biased stretch (polar residues) spans 116-132 (QDNPSTSGCSSEQSARA). At T121 the chain carries Phosphothreonine; by CSNK1E. 2 positions are modified to phosphoserine; by CSNK1E: S122 and S126. The short motif at 138–147 (LMTALRELKL) is the Nuclear export signal 1 element. PAS domains are found at residues 208-275 (ITSE…PFRL) and 348-414 (YEAP…KILQ). In terms of domain architecture, PAC spans 422 to 465 (HSPIRFCARNGEYVTMDTSWAGFVHPWSRKVAFVLGRHKVRTAP). The Nuclear export signal 2 motif lies at 489-498 (LSEQIHRLLL). Disordered stretches follow at residues 503–544 (SSSP…PAPV) and 643–694 (TKRK…KEPV). 2 stretches are compositionally biased toward low complexity: residues 523-533 (SPGSSSDSNGG) and 648-658 (ASSSSCTASSA). Residues 592 to 811 (ELEVVPMPNQ…GLDSSSATPS (220 aa)) are required for phosphorylation by CSNK1E. Residues S657, S659, S700, and S811 each carry the phosphoserine modification. 2 disordered regions span residues 802–867 (GLDS…PPST) and 931–1030 (LSQA…DALS). A Nuclear localization signal motif is present at residues 820–836 (VPPGRRHHCRSKAKRSR). Over residues 823 to 840 (GRRHHCRSKAKRSRHHHT) the composition is skewed to basic residues. Residues 853–867 (SPVPPSGPWPPPPST) show a composition bias toward pro residues. Residues 943–954 (ASHSPSPSLTPL) show a composition bias toward low complexity. A compositionally biased stretch (polar residues) spans 967 to 979 (FNSRCSSPLQLNL). 2 positions are modified to phosphoserine: S972 and S973. The short motif at 975–982 (LQLNLLQL) is the Nuclear export signal 3 element. The LXXLL motif lies at 1036-1040 (LELLL). The segment covering 1045–1055 (RSGTGSAASGS) has biased composition (low complexity). Disordered stretches follow at residues 1045–1091 (RSGT…SKYF) and 1202–1285 (IQDP…NSTS). Over residues 1056–1070 (LGSGLGSGSGSGSHE) the composition is skewed to gly residues. Low complexity predominate over residues 1071-1088 (GGSTSASITRSSQSSHTS). A CRY binding domain region spans residues 1142–1285 (SRDRASVLKQ…ALPAEENSTS (144 aa)). Gly residues predominate over residues 1229 to 1241 (GEGGGGGGGGGEG). Over residues 1269 to 1285 (GGSSSSPALPAEENSTS) the composition is skewed to polar residues.

In terms of assembly, homodimer. Component of the circadian core oscillator, which includes the CRY proteins, CLOCK or NPAS2, BMAL1 or BMAL2, CSNK1D and/or CSNK1E, TIMELESS, and the PER proteins. Interacts directly with TIMELESS, PER2, PER3, CRY1 and CRY2. Interacts with BMAL1 and CLOCK. Interacts with GPRASP1. Interacts (phosphorylated) with BTRC and FBXW11; the interactions trigger proteasomal degradation. Interacts with NONO, WDR5 and SFPQ. Interacts with USP2. Interacts with HNF4A. Post-translationally, phosphorylated on serine residues by CSNK1D, CSNK1E and probably also by CSNK1G2. Phosphorylation by CSNK1D or CSNK1E promotes nuclear location of PER proteins as well as ubiquitination and subsequent degradation. May be dephosphorylated by PP1. In terms of processing, ubiquitinated; requires phosphorylation by CSNK1E and interaction with BTRC and FBXW11. Deubiquitinated by USP2. In terms of tissue distribution, expressed in the brain, mainly in the suprachiasmatic nucleus (SCN). Expression also found in the harderian gland, lung, eye, intestine, liver and skeletal muscle.

The protein resides in the nucleus. It is found in the cytoplasm. In terms of biological role, transcriptional repressor which forms a core component of the circadian clock. The circadian clock, an internal time-keeping system, regulates various physiological processes through the generation of approximately 24 hour circadian rhythms in gene expression, which are translated into rhythms in metabolism and behavior. It is derived from the Latin roots 'circa' (about) and 'diem' (day) and acts as an important regulator of a wide array of physiological functions including metabolism, sleep, body temperature, blood pressure, endocrine, immune, cardiovascular, and renal function. Consists of two major components: the central clock, residing in the suprachiasmatic nucleus (SCN) of the brain, and the peripheral clocks that are present in nearly every tissue and organ system. Both the central and peripheral clocks can be reset by environmental cues, also known as Zeitgebers (German for 'timegivers'). The predominant Zeitgeber for the central clock is light, which is sensed by retina and signals directly to the SCN. The central clock entrains the peripheral clocks through neuronal and hormonal signals, body temperature and feeding-related cues, aligning all clocks with the external light/dark cycle. Circadian rhythms allow an organism to achieve temporal homeostasis with its environment at the molecular level by regulating gene expression to create a peak of protein expression once every 24 hours to control when a particular physiological process is most active with respect to the solar day. Transcription and translation of core clock components (CLOCK, NPAS2, BMAL1, BMAL2, PER1, PER2, PER3, CRY1 and CRY2) plays a critical role in rhythm generation, whereas delays imposed by post-translational modifications (PTMs) are important for determining the period (tau) of the rhythms (tau refers to the period of a rhythm and is the length, in time, of one complete cycle). A diurnal rhythm is synchronized with the day/night cycle, while the ultradian and infradian rhythms have a period shorter and longer than 24 hours, respectively. Disruptions in the circadian rhythms contribute to the pathology of cardiovascular diseases, cancer, metabolic syndromes and aging. A transcription/translation feedback loop (TTFL) forms the core of the molecular circadian clock mechanism. Transcription factors, CLOCK or NPAS2 and BMAL1 or BMAL2, form the positive limb of the feedback loop, act in the form of a heterodimer and activate the transcription of core clock genes and clock-controlled genes (involved in key metabolic processes), harboring E-box elements (5'-CACGTG-3') within their promoters. The core clock genes: PER1/2/3 and CRY1/2 which are transcriptional repressors form the negative limb of the feedback loop and interact with the CLOCK|NPAS2-BMAL1|BMAL2 heterodimer inhibiting its activity and thereby negatively regulating their own expression. This heterodimer also activates nuclear receptors NR1D1/2 and RORA/B/G, which form a second feedback loop and which activate and repress BMAL1 transcription, respectively. Regulates circadian target genes expression at post-transcriptional levels, but may not be required for the repression at transcriptional level. Controls PER2 protein decay. Represses CRY2 preventing its repression on CLOCK/BMAL1 target genes such as FXYD5 and SCNN1A in kidney and PPARA in liver. Besides its involvement in the maintenance of the circadian clock, has an important function in the regulation of several processes. Participates in the repression of glucocorticoid receptor NR3C1/GR-induced transcriptional activity by reducing the association of NR3C1/GR to glucocorticoid response elements (GREs) by BMAL1:CLOCK. Plays a role in the modulation of the neuroinflammatory state via the regulation of inflammatory mediators release, such as CCL2 and IL6. In spinal astrocytes, negatively regulates the MAPK14/p38 and MAPK8/JNK MAPK cascades as well as the subsequent activation of NFkappaB. Coordinately regulates the expression of multiple genes that are involved in the regulation of renal sodium reabsorption. Can act as gene expression activator in a gene and tissue specific manner, in kidney enhances WNK1 and SLC12A3 expression in collaboration with CLOCK. Modulates hair follicle cycling. Represses the CLOCK-BMAL1 induced transcription of BHLHE40/DEC1. In Spalax judaei (Judean Mountains blind mole rat), this protein is Period circadian protein homolog 1 (PER1).